A 196-amino-acid polypeptide reads, in one-letter code: Small ribosomal subunit protein uS4c (196 aa).

Residues 17–36 are disordered; the sequence is ALPGLTRKTPKSGSNLKKKF. Residues 89–150 form the S4 RNA-binding domain; sequence MRLDNILFRL…NQRSKRLIQN (62 aa).

It belongs to the universal ribosomal protein uS4 family. In terms of assembly, part of the 30S ribosomal subunit. Contacts protein S5. The interaction surface between S4 and S5 is involved in control of translational fidelity.

It localises to the plastid. It is found in the chloroplast. In terms of biological role, one of the primary rRNA binding proteins, it binds directly to 16S rRNA where it nucleates assembly of the body of the 30S subunit. Its function is as follows. With S5 and S12 plays an important role in translational accuracy. The protein is Small ribosomal subunit protein uS4c (rps4) of Phyllostachys flexuosa (Drooping timber bamboo).